The following is a 128-amino-acid chain: Large ribosomal subunit protein uL24 (128 aa).

It belongs to the universal ribosomal protein uL24 family. As to quaternary structure, part of the 50S ribosomal subunit.

In terms of biological role, one of two assembly initiator proteins, it binds directly to the 5'-end of the 23S rRNA, where it nucleates assembly of the 50S subunit. Located at the polypeptide exit tunnel on the outside of the subunit. This chain is Large ribosomal subunit protein uL24, found in Pyrobaculum calidifontis (strain DSM 21063 / JCM 11548 / VA1).